Here is a 408-residue protein sequence, read N- to C-terminus: Aminopeptidase T (408 aa).

E250, E316, E340, H345, H376, and D378 together coordinate a divalent metal cation.

Belongs to the peptidase M29 family. Homodimer. Co(2+) is required as a cofactor. The cofactor is Zn(2+). It depends on Mg(2+) as a cofactor.

Metal-dependent exopeptidase. The protein is Aminopeptidase T of Thermus thermophilus (strain ATCC 27634 / DSM 579 / HB8).